Reading from the N-terminus, the 160-residue chain is Succinate dehydrogenase assembly factor 2-B, mitochondrial (160 aa).

Residues 1–23 (MLRQLKLTLNISRWIFMPWQRHA) constitute a mitochondrion transit peptide.

It belongs to the SDHAF2 family. In terms of assembly, interacts with the flavoprotein subunit within the SDH catalytic dimer.

The protein resides in the mitochondrion matrix. Functionally, plays an essential role in the assembly of succinate dehydrogenase (SDH), an enzyme complex (also referred to as respiratory complex II) that is a component of both the tricarboxylic acid (TCA) cycle and the mitochondrial electron transport chain, and which couples the oxidation of succinate to fumarate with the reduction of ubiquinone (coenzyme Q) to ubiquinol. Required for flavinylation (covalent attachment of FAD) of the flavoprotein subunit of the SDH catalytic dimer. This is Succinate dehydrogenase assembly factor 2-B, mitochondrial from Drosophila pseudoobscura pseudoobscura (Fruit fly).